The primary structure comprises 427 residues: Serine hydroxymethyltransferase (427 aa).

(6S)-5,6,7,8-tetrahydrofolate contacts are provided by residues Leu-118 and 122-124 (GHL). An N6-(pyridoxal phosphate)lysine modification is found at Lys-227. (6S)-5,6,7,8-tetrahydrofolate is bound by residues Glu-243 and 351 to 353 (SPF).

The protein belongs to the SHMT family. Homodimer. It depends on pyridoxal 5'-phosphate as a cofactor.

It localises to the cytoplasm. It catalyses the reaction (6R)-5,10-methylene-5,6,7,8-tetrahydrofolate + glycine + H2O = (6S)-5,6,7,8-tetrahydrofolate + L-serine. The protein operates within one-carbon metabolism; tetrahydrofolate interconversion. It functions in the pathway amino-acid biosynthesis; glycine biosynthesis; glycine from L-serine: step 1/1. Functionally, catalyzes the reversible interconversion of serine and glycine with tetrahydrofolate (THF) serving as the one-carbon carrier. This reaction serves as the major source of one-carbon groups required for the biosynthesis of purines, thymidylate, methionine, and other important biomolecules. Also exhibits THF-independent aldolase activity toward beta-hydroxyamino acids, producing glycine and aldehydes, via a retro-aldol mechanism. The protein is Serine hydroxymethyltransferase of Thermotoga maritima (strain ATCC 43589 / DSM 3109 / JCM 10099 / NBRC 100826 / MSB8).